Here is a 96-residue protein sequence, read N- to C-terminus: Pyrimidine/purine nucleoside phosphorylase (96 aa).

The protein belongs to the nucleoside phosphorylase PpnP family.

It catalyses the reaction a purine D-ribonucleoside + phosphate = a purine nucleobase + alpha-D-ribose 1-phosphate. It carries out the reaction adenosine + phosphate = alpha-D-ribose 1-phosphate + adenine. The catalysed reaction is cytidine + phosphate = cytosine + alpha-D-ribose 1-phosphate. The enzyme catalyses guanosine + phosphate = alpha-D-ribose 1-phosphate + guanine. It catalyses the reaction inosine + phosphate = alpha-D-ribose 1-phosphate + hypoxanthine. It carries out the reaction thymidine + phosphate = 2-deoxy-alpha-D-ribose 1-phosphate + thymine. The catalysed reaction is uridine + phosphate = alpha-D-ribose 1-phosphate + uracil. The enzyme catalyses xanthosine + phosphate = alpha-D-ribose 1-phosphate + xanthine. Functionally, catalyzes the phosphorolysis of diverse nucleosides, yielding D-ribose 1-phosphate and the respective free bases. Can use uridine, adenosine, guanosine, cytidine, thymidine, inosine and xanthosine as substrates. Also catalyzes the reverse reactions. This chain is Pyrimidine/purine nucleoside phosphorylase, found in Erwinia tasmaniensis (strain DSM 17950 / CFBP 7177 / CIP 109463 / NCPPB 4357 / Et1/99).